We begin with the raw amino-acid sequence, 381 residues long: Succinyl-diaminopimelate desuccinylase (381 aa).

His-71 contributes to the Zn(2+) binding site. Residue Asp-73 is part of the active site. Asp-104 serves as a coordination point for Zn(2+). The Proton acceptor role is filled by Glu-138. Positions 139, 167, and 353 each coordinate Zn(2+).

The protein belongs to the peptidase M20A family. DapE subfamily. As to quaternary structure, homodimer. It depends on Zn(2+) as a cofactor. The cofactor is Co(2+).

The enzyme catalyses N-succinyl-(2S,6S)-2,6-diaminopimelate + H2O = (2S,6S)-2,6-diaminopimelate + succinate. Its pathway is amino-acid biosynthesis; L-lysine biosynthesis via DAP pathway; LL-2,6-diaminopimelate from (S)-tetrahydrodipicolinate (succinylase route): step 3/3. Functionally, catalyzes the hydrolysis of N-succinyl-L,L-diaminopimelic acid (SDAP), forming succinate and LL-2,6-diaminopimelate (DAP), an intermediate involved in the bacterial biosynthesis of lysine and meso-diaminopimelic acid, an essential component of bacterial cell walls. In Shewanella halifaxensis (strain HAW-EB4), this protein is Succinyl-diaminopimelate desuccinylase.